Here is a 361-residue protein sequence, read N- to C-terminus: Trehalose 6-phosphate phosphatase RA3 (361 aa).

This sequence belongs to the trehalose phosphatase family. Requires a divalent metal cation as cofactor. Expressed in axillary inflorescence meristems.

It carries out the reaction alpha,alpha-trehalose 6-phosphate + H2O = alpha,alpha-trehalose + phosphate. It participates in glycan biosynthesis; trehalose biosynthesis. Functionally, removes the phosphate from trehalose 6-phosphate to produce free trehalose. Is specific for trehalose 6-phosphate. Does not possess activity toward glucose, sucrose or fructose 6-phosphates. Regulates inflorescence branching. Required to establish the correct identity and determinacy of axillary meristems in both male and female inflorescences. May act through a sugar signal that moves into axillary meristems. Acts upstream of RA1. May have a transcriptional regulatory function. The polypeptide is Trehalose 6-phosphate phosphatase RA3 (Zea mays (Maize)).